The sequence spans 428 residues: Glutamyl-tRNA reductase (428 aa).

Residues 50 to 53 (TCNR), Ser110, 115 to 117 (ETQ), and Gln121 contribute to the substrate site. The active-site Nucleophile is the Cys51. 190 to 195 (GAGEMG) is a binding site for NADP(+).

It belongs to the glutamyl-tRNA reductase family. Homodimer.

The catalysed reaction is (S)-4-amino-5-oxopentanoate + tRNA(Glu) + NADP(+) = L-glutamyl-tRNA(Glu) + NADPH + H(+). It functions in the pathway porphyrin-containing compound metabolism; protoporphyrin-IX biosynthesis; 5-aminolevulinate from L-glutamyl-tRNA(Glu): step 1/2. Functionally, catalyzes the NADPH-dependent reduction of glutamyl-tRNA(Glu) to glutamate 1-semialdehyde (GSA). The chain is Glutamyl-tRNA reductase from Campylobacter curvus (strain 525.92).